Here is a 254-residue protein sequence, read N- to C-terminus: Imidazole glycerol phosphate synthase subunit HisF (254 aa).

Active-site residues include aspartate 11 and aspartate 130.

It belongs to the HisA/HisF family. Heterodimer of HisH and HisF.

The protein resides in the cytoplasm. It catalyses the reaction 5-[(5-phospho-1-deoxy-D-ribulos-1-ylimino)methylamino]-1-(5-phospho-beta-D-ribosyl)imidazole-4-carboxamide + L-glutamine = D-erythro-1-(imidazol-4-yl)glycerol 3-phosphate + 5-amino-1-(5-phospho-beta-D-ribosyl)imidazole-4-carboxamide + L-glutamate + H(+). The protein operates within amino-acid biosynthesis; L-histidine biosynthesis; L-histidine from 5-phospho-alpha-D-ribose 1-diphosphate: step 5/9. In terms of biological role, IGPS catalyzes the conversion of PRFAR and glutamine to IGP, AICAR and glutamate. The HisF subunit catalyzes the cyclization activity that produces IGP and AICAR from PRFAR using the ammonia provided by the HisH subunit. The protein is Imidazole glycerol phosphate synthase subunit HisF of Staphylococcus carnosus (strain TM300).